The chain runs to 61 residues: Photosystem II reaction center protein K (61 aa).

Residues 1–24 (MLNIFSLMYICLNSALYSSSFLFA) constitute a propeptide that is removed on maturation. The helical transmembrane segment at 40–60 (MPVIPVLFFLLAFVWQAAVSF) threads the bilayer.

Belongs to the PsbK family. As to quaternary structure, PSII is composed of 1 copy each of membrane proteins PsbA, PsbB, PsbC, PsbD, PsbE, PsbF, PsbH, PsbI, PsbJ, PsbK, PsbL, PsbM, PsbT, PsbX, PsbY, PsbZ, Psb30/Ycf12, at least 3 peripheral proteins of the oxygen-evolving complex and a large number of cofactors. It forms dimeric complexes.

The protein localises to the plastid. Its subcellular location is the chloroplast thylakoid membrane. One of the components of the core complex of photosystem II (PSII). PSII is a light-driven water:plastoquinone oxidoreductase that uses light energy to abstract electrons from H(2)O, generating O(2) and a proton gradient subsequently used for ATP formation. It consists of a core antenna complex that captures photons, and an electron transfer chain that converts photonic excitation into a charge separation. The protein is Photosystem II reaction center protein K of Citrus sinensis (Sweet orange).